The chain runs to 449 residues: Phosphoglucosamine mutase (449 aa).

Residue S101 is the Phosphoserine intermediate of the active site. Mg(2+)-binding residues include S101, D240, D242, and D244. A Phosphoserine modification is found at S101.

This sequence belongs to the phosphohexose mutase family. The cofactor is Mg(2+). In terms of processing, activated by phosphorylation.

It carries out the reaction alpha-D-glucosamine 1-phosphate = D-glucosamine 6-phosphate. Catalyzes the conversion of glucosamine-6-phosphate to glucosamine-1-phosphate. This chain is Phosphoglucosamine mutase, found in Streptococcus mutans serotype c (strain ATCC 700610 / UA159).